A 269-amino-acid polypeptide reads, in one-letter code: 4-hydroxy-tetrahydrodipicolinate reductase (269 aa).

Residues 11-16 (GGSGRM) and E37 contribute to the NAD(+) site. R38 is a binding site for NADP(+). NAD(+) is bound by residues 101-103 (GTT) and 125-128 (AGNM). Catalysis depends on H158, which acts as the Proton donor/acceptor. H159 provides a ligand contact to (S)-2,3,4,5-tetrahydrodipicolinate. K162 functions as the Proton donor in the catalytic mechanism. (S)-2,3,4,5-tetrahydrodipicolinate is bound at residue 168–169 (GT).

It belongs to the DapB family.

It localises to the cytoplasm. It carries out the reaction (S)-2,3,4,5-tetrahydrodipicolinate + NAD(+) + H2O = (2S,4S)-4-hydroxy-2,3,4,5-tetrahydrodipicolinate + NADH + H(+). It catalyses the reaction (S)-2,3,4,5-tetrahydrodipicolinate + NADP(+) + H2O = (2S,4S)-4-hydroxy-2,3,4,5-tetrahydrodipicolinate + NADPH + H(+). It functions in the pathway amino-acid biosynthesis; L-lysine biosynthesis via DAP pathway; (S)-tetrahydrodipicolinate from L-aspartate: step 4/4. Its function is as follows. Catalyzes the conversion of 4-hydroxy-tetrahydrodipicolinate (HTPA) to tetrahydrodipicolinate. This Dinoroseobacter shibae (strain DSM 16493 / NCIMB 14021 / DFL 12) protein is 4-hydroxy-tetrahydrodipicolinate reductase.